The following is an 88-amino-acid chain: HssA/B-like protein 6 (88 aa).

The interval 1–22 (MSILSALTSISNPMKSSNSNVA) is disordered.

It belongs to the hssA/B family.

The protein is HssA/B-like protein 6 (hssl6) of Dictyostelium discoideum (Social amoeba).